Consider the following 32-residue polypeptide: GLIKPGTLWCGMGNNAETYDQLGPFADVDSCK.

It belongs to the phospholipase A2 family. Group III subfamily. It depends on Ca(2+) as a cofactor.

Its subcellular location is the secreted. The protein localises to the nematocyst. It carries out the reaction a 1,2-diacyl-sn-glycero-3-phosphocholine + H2O = a 1-acyl-sn-glycero-3-phosphocholine + a fatty acid + H(+). Functionally, PLA2 catalyzes the calcium-dependent hydrolysis of the 2-acyl groups in 3-sn-phosphoglycerides. The sequence is that of Toxic phospholipase A2 from Rhopilema nomadica (Mediteranean medusa).